Reading from the N-terminus, the 172-residue chain is RNA silencing suppressor p19 (172 aa).

A compositionally biased stretch (basic and acidic residues) spans 1 to 20 (MERAIQGNDAREQANSERWD). A disordered region spans residues 1–38 (MERAIQGNDAREQANSERWDGGSGSSTSPFQLPDESPS).

The protein belongs to the tombusvirus protein p19 family. As to quaternary structure, homodimer.

Functionally, viral suppressor of RNA silencing which binds specifically to silencing RNAs (siRNAs). Acts as a molecular caliper to specifically select siRNAs based on the length of the duplex region of the RNA. This is RNA silencing suppressor p19 from Tomato bushy stunt virus (strain type) (TBSV).